The following is a 501-amino-acid chain: Aldehyde dehydrogenase, cytosolic 1 (501 aa).

NAD(+) is bound at residue 246–251 (GSTEVG). The Proton acceptor role is filled by Glu269. The Nucleophile role is filled by Cys303.

The protein belongs to the aldehyde dehydrogenase family. In terms of assembly, homotetramer. In terms of tissue distribution, eye specific, with very high expression in the lens.

The protein localises to the cytoplasm. It catalyses the reaction an aldehyde + NAD(+) + H2O = a carboxylate + NADH + 2 H(+). It functions in the pathway alcohol metabolism; ethanol degradation; acetate from ethanol: step 2/2. Functionally, major component of the eye of elephant shrews, which in contrast to other mammals, possesses both a lens- and a non-lens class-1 aldehyde dehydrogenase 1. This eye-specific form is a structural protein of the lens and, in other part of the eye, serves as the major form of ALDH1. Can convert/oxidize retinaldehyde to retinoic acid. This is Aldehyde dehydrogenase, cytosolic 1 (ALDH1) from Elephantulus edwardii (Cape long-eared elephant shrew).